Reading from the N-terminus, the 198-residue chain is GTP cyclohydrolase-2 (198 aa).

52 to 56 (RMHSE) provides a ligand contact to GTP. The Zn(2+) site is built by cysteine 57, cysteine 68, and cysteine 70. Residues glutamine 73, 94–96 (EGR), and threonine 116 contribute to the GTP site. The active-site Proton acceptor is the aspartate 128. Catalysis depends on arginine 130, which acts as the Nucleophile. 2 residues coordinate GTP: threonine 151 and lysine 156.

Belongs to the GTP cyclohydrolase II family. It depends on Zn(2+) as a cofactor.

It catalyses the reaction GTP + 4 H2O = 2,5-diamino-6-hydroxy-4-(5-phosphoribosylamino)-pyrimidine + formate + 2 phosphate + 3 H(+). It participates in cofactor biosynthesis; riboflavin biosynthesis; 5-amino-6-(D-ribitylamino)uracil from GTP: step 1/4. Functionally, catalyzes the conversion of GTP to 2,5-diamino-6-ribosylamino-4(3H)-pyrimidinone 5'-phosphate (DARP), formate and pyrophosphate. This Vibrio cholerae serotype O1 (strain ATCC 39315 / El Tor Inaba N16961) protein is GTP cyclohydrolase-2.